Reading from the N-terminus, the 490-residue chain is Glutathione hydrolase 6 (490 aa).

The Cytoplasmic portion of the chain corresponds to 1–52 (MEPEAGPVLYQKLRVWEPSLESEEEEEEISEQLILDASGPHDSSGNKAGRLP). Residues 53–73 (GAWAQLVAALLLLAIGFSLAV) traverse the membrane as a helical; Signal-anchor for type II membrane protein segment. Topologically, residues 74–490 (RQLCSSGASP…PSGCCPFQGF (417 aa)) are extracellular. 3 N-linked (GlcNAc...) asparagine glycosylation sites follow: N160, N165, and N374.

The protein belongs to the gamma-glutamyltransferase family. As to quaternary structure, heterodimer composed of the light and heavy chains. The active site is located in the light chain. Post-translationally, cleaved by autocatalysis into a large and a small subunit and the autocatalytic cleavage is essential to the functional activation of the enzyme.

It is found in the membrane. The catalysed reaction is an N-terminal (5-L-glutamyl)-[peptide] + an alpha-amino acid = 5-L-glutamyl amino acid + an N-terminal L-alpha-aminoacyl-[peptide]. It carries out the reaction glutathione + H2O = L-cysteinylglycine + L-glutamate. It catalyses the reaction an S-substituted glutathione + H2O = an S-substituted L-cysteinylglycine + L-glutamate. The protein operates within sulfur metabolism; glutathione metabolism. Its function is as follows. Hydrolyzes and transfers gamma-glutamyl moieties from glutathione and other gamma-glutamyl compounds to acceptors. The sequence is that of Glutathione hydrolase 6 from Bos taurus (Bovine).